We begin with the raw amino-acid sequence, 128 residues long: Prokineticin-2 (128 aa).

The signal sequence occupies residues 1-26; sequence MGDPRCAPLLLLLLLPLLFTPPAGDA. Disulfide bonds link Cys-33-Cys-45, Cys-39-Cys-57, Cys-44-Cys-106, Cys-67-Cys-114, and Cys-108-Cys-124.

The protein belongs to the AVIT (prokineticin) family. In terms of tissue distribution, expressed in the SCN and among a few other discrete brain areas, including the islands of Calleja, media l preoptic area of the hypothalamus and the shell of the nucleus accumbens. Highly expressed in testis. In the SCN, expression subjected to high amplitude of circadian oscillation.

The protein localises to the secreted. In terms of biological role, may function as an output molecule from the suprachiasmatic nucleus (SCN) that transmits behavioral circadian rhythm. May also function locally within the SCN to synchronize output. Potently contracts gastrointestinal (GI) smooth muscle. The protein is Prokineticin-2 (Prok2) of Mus musculus (Mouse).